A 118-amino-acid chain; its full sequence is MARIAGVNIPDNKHAVISLTYIFGVGRTTAQKILEAVGIAPSTKVSQLDDTQLDAIRAQVSEYMTEGDLRREVSMNIKRLVDLGCYRGIRHRRNLPVRGQNTKNNARTRKGPTRPLKR.

The tract at residues 92–118 (RRNLPVRGQNTKNNARTRKGPTRPLKR) is disordered. A compositionally biased stretch (basic residues) spans 106-118 (ARTRKGPTRPLKR).

This sequence belongs to the universal ribosomal protein uS13 family. As to quaternary structure, part of the 30S ribosomal subunit. Forms a loose heterodimer with protein S19. Forms two bridges to the 50S subunit in the 70S ribosome.

Functionally, located at the top of the head of the 30S subunit, it contacts several helices of the 16S rRNA. In the 70S ribosome it contacts the 23S rRNA (bridge B1a) and protein L5 of the 50S subunit (bridge B1b), connecting the 2 subunits; these bridges are implicated in subunit movement. Contacts the tRNAs in the A and P-sites. The chain is Small ribosomal subunit protein uS13 from Psychrobacter arcticus (strain DSM 17307 / VKM B-2377 / 273-4).